The chain runs to 254 residues: Phosphomannomutase (254 aa).

The Nucleophile role is filled by Asp-16. Residues Asp-16 and Asp-18 each coordinate Mg(2+). The active-site Proton donor/acceptor is the Asp-18. Arg-25, Arg-129, Arg-140, Arg-147, Ser-185, and Asp-187 together coordinate alpha-D-mannose 1-phosphate. Mg(2+)-binding residues include Asp-216, Tyr-228, Asp-230, and Thr-233.

It belongs to the eukaryotic PMM family. Homodimer.

The protein localises to the cytoplasm. It catalyses the reaction alpha-D-mannose 1-phosphate = D-mannose 6-phosphate. Its pathway is nucleotide-sugar biosynthesis; GDP-alpha-D-mannose biosynthesis; alpha-D-mannose 1-phosphate from D-fructose 6-phosphate: step 2/2. Its function is as follows. Involved in the synthesis of the GDP-mannose and dolichol-phosphate-mannose required for a number of critical mannosyl transfer reactions. Required for maintaining N-linked glycoprotein glycosylation at the neuromuscular junction (NMJ) synaptomatrix, and thus acts in multiple pathways that prevent NMJ structural overgrowth, restrict synaptic bouton differentiation, and limit NMJ neurotransmission strength, in order to maintain viability, coordinate movement, and in adults ensure correct wing positioning. Acts in the NMJ trans-synaptic Wg pathway via glycosylation of synaptic Mmp2 which enables dlp/wg signaling during development. In Drosophila melanogaster (Fruit fly), this protein is Phosphomannomutase.